We begin with the raw amino-acid sequence, 980 residues long: Serine/threonine-protein phosphatase 4 regulatory subunit 3 (980 aa).

Positions 1-105 (MTTDTRRRVK…EKICQVQGKD (105 aa)) constitute a WH1 domain. 3 disordered regions span residues 640 to 668 (RDKM…RQME), 695 to 861 (VSEK…SLCD), and 885 to 980 (VTAA…ARQA). Polar residues predominate over residues 695–708 (VSEKNGPQTQNQQK). Low complexity-rich tracts occupy residues 709–749 (SSPP…SSSP), 757–789 (QTQA…QQTQ), 803–859 (EAPQ…AASL), and 885–926 (VTAA…SPAS). The span at 929 to 939 (QDANSTEGTSS) shows a compositional bias: polar residues. The segment covering 940-951 (EADKTTAKKGLV) has biased composition (basic and acidic residues). Positions 953–968 (YESDSGEDDYEEDEYS) are enriched in acidic residues.

This sequence belongs to the SMEK family. Serine/threonine-protein phosphatase 4 (PP4) occurs in different assemblies of the catalytic and one or more regulatory subunits. Probably part of a PP4 PPP4C-PPP4R2-PPP4R3 complex containing Pp4-19C, PPP4R2r and flfl. Interacts with mira. In terms of tissue distribution, expressed in neuroblasts.

Its subcellular location is the nucleus. The protein resides in the membrane. It is found in the cytoplasm. Functionally, regulatory subunit of serine/threonine-protein phosphatase 4. The probable PP4 complex Pp4-19C-PPP4R2r-flfl (PPP4C-PPP4R2-PPP4R3) is required to prevent caspase induced cell death (in vitro). May be involved in DNA damage repair. Key mediator specific for the localization of mira and associated cell fate determinants during both interphase and mitosis. Nuclear Flfl is required to exclude mira/pros from the nucleus when inefficiently bound to the cytoskeleton/cortex, whereas cytosolic or membrane-associated flfl is required for the cortical association and asymmetric localization of mira/pros/brat/stau at metaphase and anaphase. The polypeptide is Serine/threonine-protein phosphatase 4 regulatory subunit 3 (flfl) (Drosophila melanogaster (Fruit fly)).